Reading from the N-terminus, the 575-residue chain is V-type ATP synthase alpha chain (575 aa).

Residue 238–245 (GPFGAGKT) participates in ATP binding.

This sequence belongs to the ATPase alpha/beta chains family.

It catalyses the reaction ATP + H2O + 4 H(+)(in) = ADP + phosphate + 5 H(+)(out). Its function is as follows. Produces ATP from ADP in the presence of a proton gradient across the membrane. The V-type alpha chain is a catalytic subunit. This chain is V-type ATP synthase alpha chain, found in Borreliella afzelii (strain PKo) (Borrelia afzelii).